Consider the following 560-residue polypeptide: Arginine--tRNA ligase (560 aa).

The 'HIGH' region signature appears at 121–131 (PNIAKPFSMGH).

This sequence belongs to the class-I aminoacyl-tRNA synthetase family. As to quaternary structure, monomer.

The protein resides in the cytoplasm. The enzyme catalyses tRNA(Arg) + L-arginine + ATP = L-arginyl-tRNA(Arg) + AMP + diphosphate. In Exiguobacterium sibiricum (strain DSM 17290 / CCUG 55495 / CIP 109462 / JCM 13490 / 255-15), this protein is Arginine--tRNA ligase.